We begin with the raw amino-acid sequence, 207 residues long: DNA-directed RNA polymerase subunit alpha (207 aa).

This sequence belongs to the RNA polymerase alpha chain family. In plastids the minimal PEP RNA polymerase catalytic core is composed of four subunits: alpha, beta, beta', and beta''. When a (nuclear-encoded) sigma factor is associated with the core the holoenzyme is formed, which can initiate transcription.

The protein localises to the plastid. It localises to the chloroplast. The enzyme catalyses RNA(n) + a ribonucleoside 5'-triphosphate = RNA(n+1) + diphosphate. Its function is as follows. DNA-dependent RNA polymerase catalyzes the transcription of DNA into RNA using the four ribonucleoside triphosphates as substrates. This is DNA-directed RNA polymerase subunit alpha (rpoA) from Euglena anabaena (Euglenaria anabaena).